The chain runs to 258 residues: Imidazole glycerol phosphate synthase subunit HisF (258 aa).

Active-site residues include D11 and D130.

It belongs to the HisA/HisF family. As to quaternary structure, heterodimer of HisH and HisF.

The protein localises to the cytoplasm. It carries out the reaction 5-[(5-phospho-1-deoxy-D-ribulos-1-ylimino)methylamino]-1-(5-phospho-beta-D-ribosyl)imidazole-4-carboxamide + L-glutamine = D-erythro-1-(imidazol-4-yl)glycerol 3-phosphate + 5-amino-1-(5-phospho-beta-D-ribosyl)imidazole-4-carboxamide + L-glutamate + H(+). The protein operates within amino-acid biosynthesis; L-histidine biosynthesis; L-histidine from 5-phospho-alpha-D-ribose 1-diphosphate: step 5/9. IGPS catalyzes the conversion of PRFAR and glutamine to IGP, AICAR and glutamate. The HisF subunit catalyzes the cyclization activity that produces IGP and AICAR from PRFAR using the ammonia provided by the HisH subunit. The sequence is that of Imidazole glycerol phosphate synthase subunit HisF from Roseiflexus sp. (strain RS-1).